Reading from the N-terminus, the 344-residue chain is Serpentine receptor class delta-3 (344 aa).

A run of 7 helical transmembrane segments spans residues 21 to 41 (IIGYIVNPLGILFNTLLIILI), 54 to 74 (MLHLNFALCDLFSCLAGMLAL), 102 to 122 (FLHVFVCHCLAHSQWILMISF), 142 to 162 (ICILTYLPSLLFVIVYWSDVA), 203 to 223 (FSAIVYMTIPCFPIYGVIVFF), 259 to 279 (IVPIFWLTASTFYLLALFQVV), and 287 to 307 (MPFRIMECMPMITPLISLYFV).

This sequence belongs to the nematode receptor-like protein srd family.

Its subcellular location is the membrane. The polypeptide is Serpentine receptor class delta-3 (srd-3) (Caenorhabditis elegans).